Consider the following 87-residue polypeptide: UPF0512 protein B (87 aa).

It belongs to the UPF0512 family.

This Dictyostelium discoideum (Social amoeba) protein is UPF0512 protein B.